A 479-amino-acid chain; its full sequence is Serine palmitoyltransferase 1 (479 aa).

Residues 1–16 (MFLFDIYNNILYYTKE) lie on the Lumenal side of the membrane. The chain crosses the membrane as a helical span at residues 17 to 37 (FIVTSTSPNLFIHGLMAVFII). The Cytoplasmic portion of the chain corresponds to 38-479 (YLLTKRPFKP…KCTSFVLESN (442 aa)).

Belongs to the class-II pyridoxal-phosphate-dependent aminotransferase family. In terms of assembly, forms a heterodimer with sptB. Pyridoxal 5'-phosphate is required as a cofactor.

The protein resides in the endoplasmic reticulum membrane. The catalysed reaction is L-serine + hexadecanoyl-CoA + H(+) = 3-oxosphinganine + CO2 + CoA. It functions in the pathway lipid metabolism; sphingolipid metabolism. Its function is as follows. Component of serine palmitoyltransferase (SPT), which catalyzes the committed step in the synthesis of sphingolipids, the condensation of serine with palmitoyl CoA to form the long chain base 3-ketosphinganine. The protein is Serine palmitoyltransferase 1 (sptA) of Dictyostelium discoideum (Social amoeba).